The chain runs to 76 residues: Exodeoxyribonuclease 7 small subunit (76 aa).

This sequence belongs to the XseB family. In terms of assembly, heterooligomer composed of large and small subunits.

It localises to the cytoplasm. The catalysed reaction is Exonucleolytic cleavage in either 5'- to 3'- or 3'- to 5'-direction to yield nucleoside 5'-phosphates.. In terms of biological role, bidirectionally degrades single-stranded DNA into large acid-insoluble oligonucleotides, which are then degraded further into small acid-soluble oligonucleotides. This Latilactobacillus sakei subsp. sakei (strain 23K) (Lactobacillus sakei subsp. sakei) protein is Exodeoxyribonuclease 7 small subunit.